A 196-amino-acid polypeptide reads, in one-letter code: MAGVFKTVTFLVLVFAAVVVFAEDYDVGDDTEWTRPMDPEFYTTWATGKTFRVGDELEFDFAAGRHDVAVVSEAAFENCEKEKPISHMTVPPVKIMLNTTGPQYFICTVGDHCRFGQKLSITVVAAGATGGATPGAGATPAPGSTPSTGGTTPPTAGGTTTPSGSSGTTTPAGNAASSLGGATFLVAFVSAVVALF.

The first 22 residues, 1–22 (MAGVFKTVTFLVLVFAAVVVFA), serve as a signal peptide directing secretion. A Phytocyanin domain is found at 23-125 (EDYDVGDDTE…GQKLSITVVA (103 aa)). Residue His-66 coordinates Cu cation. Cys-79 and Cys-113 are oxidised to a cystine. Asn-98 carries an N-linked (GlcNAc...) asparagine glycan. Cu cation contacts are provided by Cys-107, His-112, and Gln-117. The interval 133–173 (TPGAGATPAPGSTPSTGGTTPPTAGGTTTPSGSSGTTTPAG) is disordered. A compositionally biased stretch (low complexity) spans 135–173 (GAGATPAPGSTPSTGGTTPPTAGGTTTPSGSSGTTTPAG). The GPI-anchor amidated asparagine moiety is linked to residue Asn-174. Positions 175–196 (AASSLGGATFLVAFVSAVVALF) are cleaved as a propeptide — removed in mature form.

The protein resides in the cell membrane. In terms of biological role, probably acts as an electron carrier. The chain is Blue copper protein (BCB) from Arabidopsis thaliana (Mouse-ear cress).